We begin with the raw amino-acid sequence, 359 residues long: Peptide chain release factor 1 (359 aa).

Q236 bears the N5-methylglutamine mark.

Belongs to the prokaryotic/mitochondrial release factor family. Post-translationally, methylated by PrmC. Methylation increases the termination efficiency of RF1.

It is found in the cytoplasm. Functionally, peptide chain release factor 1 directs the termination of translation in response to the peptide chain termination codons UAG and UAA. In Streptococcus pyogenes serotype M3 (strain ATCC BAA-595 / MGAS315), this protein is Peptide chain release factor 1.